We begin with the raw amino-acid sequence, 284 residues long: Interferon antagonist OPG040 (284 aa).

ANK repeat units lie at residues 29 to 58 (HGHSALYYAIADNNVRLVCTLLNAGALKNL), 60 to 89 (ENEFPLHQAATLEDTKIVKILLFSGLDDSQ), 93 to 122 (KGNTALYYAVDSGNMQTVKLFVKKNWRLMF), 127 to 157 (GWKTSFYHAVMLNDVSIVSYFLSEIPSTFDL), 159 to 188 (ILLSCIHITIKNGHVDMMILLLDYMTSTNT), and 193 to 222 (LFIPDIKLAIDNKDIEMLQALFKYDINIYS).

It belongs to the orthopoxvirus OPG039 family.

The protein resides in the host cytoplasm. It is found in the host nucleus. Functionally, inhibits antiviral activity induced by type I interferons. Does not block signal transduction of IFN, but is important to counter the host antiviral state induced by a pre-treatment with IFN. Plays a role in the inhibition of host NF-kappa-B activation by preventing the acetylation of the RELA/p65 subunit of NF-kappaB. This chain is Interferon antagonist OPG040 (OPG039), found in Bos taurus (Bovine).